The primary structure comprises 191 residues: Adenine phosphoribosyltransferase (191 aa).

This sequence belongs to the purine/pyrimidine phosphoribosyltransferase family. As to quaternary structure, homodimer.

It is found in the cytoplasm. It carries out the reaction AMP + diphosphate = 5-phospho-alpha-D-ribose 1-diphosphate + adenine. It functions in the pathway purine metabolism; AMP biosynthesis via salvage pathway; AMP from adenine: step 1/1. In terms of biological role, catalyzes a salvage reaction resulting in the formation of AMP, that is energically less costly than de novo synthesis. The sequence is that of Adenine phosphoribosyltransferase from Clavibacter sepedonicus (Clavibacter michiganensis subsp. sepedonicus).